Consider the following 371-residue polypeptide: 4-hydroxyprotoasukamycin monooxygenase (371 aa).

Belongs to the bacterial luciferase oxidoreductase family. FMN serves as cofactor.

It catalyses the reaction 4-hydroxyprotoasukamycin + NADH + O2 + H(+) = asukamycin + NAD(+) + H2O. It participates in antibiotic biosynthesis. In terms of biological role, involved in the biosynthesis of the antibiotic asukamycin. Catalyzes the epoxidation of 4-hydroxyprotoasukamycin to the final product, asukamycin. Can also convert some 4-hydroxyprotoasukamycin derivatives to their asukamycin derivatives, but cannot use protoasukamycin as substrate. Can also use NADPH, but catalytic efficiency is 20-fold higher with NADH. The sequence is that of 4-hydroxyprotoasukamycin monooxygenase from Streptomyces nodosus subsp. asukaensis.